The primary structure comprises 60 residues: Large ribosomal subunit protein bL32 (60 aa).

Positions 1–22 are disordered; it reads MAVPARHTSKAKKNKRRTHYKL. Over residues 7–20 the composition is skewed to basic residues; it reads HTSKAKKNKRRTHY.

The protein belongs to the bacterial ribosomal protein bL32 family.

This chain is Large ribosomal subunit protein bL32, found in Streptococcus pyogenes serotype M3 (strain ATCC BAA-595 / MGAS315).